The sequence spans 258 residues: UPF0246 protein IL2146 (258 aa).

Belongs to the UPF0246 family.

The protein is UPF0246 protein IL2146 of Idiomarina loihiensis (strain ATCC BAA-735 / DSM 15497 / L2-TR).